Here is a 462-residue protein sequence, read N- to C-terminus: Fumarate hydratase class II (462 aa).

Substrate is bound by residues Ser97–Thr99, His127–Asp130, Ser137–Asn139, and Thr185. The active-site Proton donor/acceptor is the His186. The active site involves Ser316. Substrate contacts are provided by residues Ser317 and Lys322–Asn324.

It belongs to the class-II fumarase/aspartase family. Fumarase subfamily. Homotetramer.

It is found in the cytoplasm. It carries out the reaction (S)-malate = fumarate + H2O. It participates in carbohydrate metabolism; tricarboxylic acid cycle; (S)-malate from fumarate: step 1/1. Its function is as follows. Involved in the TCA cycle. Catalyzes the stereospecific interconversion of fumarate to L-malate. The polypeptide is Fumarate hydratase class II (Bacillus anthracis).